The following is a 497-amino-acid chain: B3 domain-containing protein REM1 (497 aa).

3 DNA-binding regions (TF-B3) span residues P7–S92, F142–H239, and F278–I379. Residues A87 to A135 are disordered. Residues E91 to E125 are compositionally biased toward acidic residues.

Specifically expressed in the reproductive meristem.

Its subcellular location is the nucleus. May play a role in flower development. This is B3 domain-containing protein REM1 (REM1) from Brassica oleracea var. botrytis (Cauliflower).